The chain runs to 34 residues: Endoglucanase 1 (34 aa).

The enzyme catalyses Endohydrolysis of (1-&gt;4)-beta-D-glucosidic linkages in cellulose, lichenin and cereal beta-D-glucans.. This chain is Endoglucanase 1, found in Sclerotinia sclerotiorum (White mold).